Reading from the N-terminus, the 254-residue chain is Arginine transport ATP-binding protein ArgV (254 aa).

The ABC transporter domain occupies 6–250 (IDAQQVCKNY…PKEQRTKDFL (245 aa)). Residue 38-45 (GPSGSGKS) participates in ATP binding.

Belongs to the ABC transporter superfamily. In terms of assembly, the complex is probably composed of two ATP-binding proteins (ArgV), two transmembrane proteins (ArgU) and a solute-binding protein (ArgT).

Its subcellular location is the cell membrane. The enzyme catalyses a polar amino acid(out) + ATP + H2O = a polar amino acid(in) + ADP + phosphate + H(+). The catalysed reaction is L-arginine(out) + ATP + H2O = L-arginine(in) + ADP + phosphate + H(+). Part of the ABC transporter complex ArgTUV involved in L-arginine import. May also transport L-citrulline. Probably responsible for energy coupling to the transport system. The sequence is that of Arginine transport ATP-binding protein ArgV from Corynebacterium glutamicum (strain ATCC 13032 / DSM 20300 / JCM 1318 / BCRC 11384 / CCUG 27702 / LMG 3730 / NBRC 12168 / NCIMB 10025 / NRRL B-2784 / 534).